Here is a 793-residue protein sequence, read N- to C-terminus: Probable alpha-fucosidase A (793 aa).

The first 20 residues, 1 to 20 (MLISGSSAALCALALPFAAA), serve as a signal peptide directing secretion. N30, N83, N100, N104, N123, N179, N199, N234, N323, N597, N622, N660, and N757 each carry an N-linked (GlcNAc...) asparagine glycan.

It belongs to the glycosyl hydrolase 95 family.

The protein localises to the secreted. It catalyses the reaction an alpha-L-fucoside + H2O = L-fucose + an alcohol. Alpha-fucosidase involved in degradation of fucosylated xyloglucans. Hydrolyzes alpha-1,2-linked fucose. The chain is Probable alpha-fucosidase A (afcA) from Aspergillus niger (strain ATCC MYA-4892 / CBS 513.88 / FGSC A1513).